A 563-amino-acid polypeptide reads, in one-letter code: Efflux pump FUS6 (563 aa).

The segment at 1 to 30 (MPQPDKMAAVNNAMPQPAPEKSLSSDPQPE) is disordered. The next 5 membrane-spanning stretches (helical) occupy residues 39–59 (WLIF…TSII), 75–95 (LYVW…PIFA), 105–125 (SLTL…GGAH), 138–158 (GIGG…MVSI), and 167–187 (IIGG…GAFA). Residue asparagine 189 is glycosylated (N-linked (GlcNAc...) asparagine). 3 helical membrane passes run 194-214 (WIFY…GLFL), 233-253 (WGGS…LSWG), and 261-281 (GWQT…FFAY). N-linked (GlcNAc...) asparagine glycosylation occurs at asparagine 299. 6 helical membrane-spanning segments follow: residues 305-325 (LLVI…FLPV), 340-360 (VMLF…GITI), 368-388 (VWHF…TLLD), 401-421 (ILFG…ILAS), 433-453 (AWTF…AAVF), and 509-529 (KVVW…CFFV). Asparagine 553 carries an N-linked (GlcNAc...) asparagine glycan.

This sequence belongs to the major facilitator superfamily. TCR/Tet family.

It localises to the membrane. In terms of biological role, efflux pump; part of the gene cluster that mediates the biosynthesis of the mycotoxin fusarin C. Within the cluster, FUS1, FUS2, FUS8 and FUS9 are sufficient for fusarin production. The other FUS cluster members are not essential for fusarin C biosynthesis. The protein is Efflux pump FUS6 of Gibberella moniliformis (strain M3125 / FGSC 7600) (Maize ear and stalk rot fungus).